Consider the following 788-residue polypeptide: Structure-specific endonuclease subunit SLX4 (788 aa).

Disordered stretches follow at residues leucine 59–arginine 86, lysine 562–serine 584, and aspartate 599–proline 622. The segment covering lysine 562–arginine 573 has biased composition (basic and acidic residues). The segment covering aspartate 612–proline 622 has biased composition (polar residues).

It belongs to the SLX4 family. Forms a heterodimer with SLX1. Phosphorylated in response to DNA damage.

The protein resides in the nucleus. Its function is as follows. Regulatory subunit of the SLX1-SLX4 structure-specific endonuclease that resolves DNA secondary structures generated during DNA repair and recombination. Has endonuclease activity towards branched DNA substrates, introducing single-strand cuts in duplex DNA close to junctions with ss-DNA. The polypeptide is Structure-specific endonuclease subunit SLX4 (Debaryomyces hansenii (strain ATCC 36239 / CBS 767 / BCRC 21394 / JCM 1990 / NBRC 0083 / IGC 2968) (Yeast)).